Consider the following 99-residue polypeptide: Small ribosomal subunit protein bS20 (99 aa).

This sequence belongs to the bacterial ribosomal protein bS20 family.

Its function is as follows. Binds directly to 16S ribosomal RNA. This is Small ribosomal subunit protein bS20 from Thermotoga neapolitana (strain ATCC 49049 / DSM 4359 / NBRC 107923 / NS-E).